The following is a 103-amino-acid chain: Sperm-associated antigen 11B (103 aa).

Residues 1-25 form the signal peptide; sequence MRQRLLPSVTSLLLVALLFPGSSQA. A glycan (N-linked (GlcNAc...) asparagine) is linked at N29.

This sequence belongs to the SPAG11 family. As to expression, specifically expressed in caput and proximal corpus of epididymis (at protein level). Present in the epididymal epithelium and on the sperm surface, with a subacrosomal equatorial distribution on the sperm head (at protein level).

The protein localises to the secreted. Its function is as follows. Has antimicrobial activity against E.coli. Plays a role in the defense response in the male reproductive tract, contributing to sperm maturation, storage and protection. The polypeptide is Sperm-associated antigen 11B (Homo sapiens (Human)).